Reading from the N-terminus, the 390-residue chain is tRNA-specific 2-thiouridylase MnmA (390 aa).

ATP is bound by residues G36–S43 and M62. An interaction with target base in tRNA region spans residues N122–D124. C127 acts as the Nucleophile in catalysis. An intrachain disulfide couples C127 to C223. G151 serves as a coordination point for ATP. Residues K173–Q175 form an interaction with tRNA region. C223 acts as the Cysteine persulfide intermediate in catalysis. The tract at residues R335–Y336 is interaction with tRNA.

This sequence belongs to the MnmA/TRMU family.

Its subcellular location is the cytoplasm. It catalyses the reaction S-sulfanyl-L-cysteinyl-[protein] + uridine(34) in tRNA + AH2 + ATP = 2-thiouridine(34) in tRNA + L-cysteinyl-[protein] + A + AMP + diphosphate + H(+). Catalyzes the 2-thiolation of uridine at the wobble position (U34) of tRNA, leading to the formation of s(2)U34. This Marinomonas sp. (strain MWYL1) protein is tRNA-specific 2-thiouridylase MnmA.